We begin with the raw amino-acid sequence, 360 residues long: Alpha-2-macroglobulin receptor-associated protein (360 aa).

An N-terminal signal peptide occupies residues 1–33 (MAPLRDRVSTLPRLQLLVLLLLPLLLVPQPIAG). Phosphoserine is present on residues S53 and S138. A coiled-coil region spans residues 222-302 (SKHSELKDRL…KHNHYQKQLE (81 aa)). The tract at residues 240–356 (RLRKVSHQGY…DLSSRVSRAR (117 aa)) is LDL receptor binding. N271 is a glycosylation site (N-linked (GlcNAc...) asparagine). Residues 357-360 (HNEL) carry the Prevents secretion from ER motif.

The protein belongs to the alpha-2-MRAP family. As to quaternary structure, interacts with the LRP1/alpha-2-macroglobulin receptor heavy and light chains; the interaction is transient and coincides with a reduction of ligand binding by the receptor. Interacts with LRP2/glycoprotein 330. Interacts with LRP1B; binding is followed by internalization and degradation. Interacts with LDLR. Interacts with SORL1. Interacts with LRP1; this interaction is followed by rapid internalization. Post-translationally, N-glycosylated.

It is found in the rough endoplasmic reticulum lumen. The protein localises to the endoplasmic reticulum-Golgi intermediate compartment lumen. It localises to the golgi apparatus. The protein resides in the cis-Golgi network. Its subcellular location is the golgi apparatus lumen. It is found in the endosome lumen. The protein localises to the cell surface. Its function is as follows. Molecular chaperone for LDL receptor-related proteins that may regulate their ligand binding activity along the secretory pathway. The polypeptide is Alpha-2-macroglobulin receptor-associated protein (Lrpap1) (Rattus norvegicus (Rat)).